A 504-amino-acid polypeptide reads, in one-letter code: PE-PGRS family protein PE_PGRS62 (504 aa).

The PE domain occupies 4 to 94; sequence VVTVPEAVAA…AAYLNTESAN (91 aa).

The protein belongs to the mycobacterial PE family. PGRS subfamily. As to quaternary structure, interacts with host Toll-like receptor 2 (TLR2).

It is found in the secreted. The protein resides in the cell wall. In terms of biological role, supports mycobacterial virulence via inhibition of phagosome maturation and host inducible nitric oxide synthase (iNOS) expression. May promote the survival within macrophages by disturbing the cytokines profiles and blocking the endoplasmic reticulum (ER) stress-mediated apoptosis. May also affect bacterial cell wall composition. Expression in Mycobacterium smegmatis, a nonpathogenic species naturally deficient in PE_PGRS genes, results in enhanced resistance to various in vitro stresses. It also leads to phagosome maturation arrest and increased survival in macrophages. In Mycobacterium tuberculosis (strain ATCC 25618 / H37Rv), this protein is PE-PGRS family protein PE_PGRS62.